The primary structure comprises 960 residues: UvrABC system protein A (960 aa).

ATP is bound at residue 35-42 (GLSGSGKS). The C4-type zinc finger occupies 270 to 297 (CAHCNVSVPELQPRLFSFNAPFGACPSC). ABC transporter domains follow at residues 327-605 (FKPE…QASL) and 625-953 (GNGN…WYIK). Residue 657 to 664 (GVSGSGKS) coordinates ATP. The segment at 756 to 782 (CEHCKGDGVITIEMNFLPDVYITCDVC) adopts a C4-type zinc-finger fold.

Belongs to the ABC transporter superfamily. UvrA family. In terms of assembly, forms a heterotetramer with UvrB during the search for lesions.

The protein localises to the cytoplasm. In terms of biological role, the UvrABC repair system catalyzes the recognition and processing of DNA lesions. UvrA is an ATPase and a DNA-binding protein. A damage recognition complex composed of 2 UvrA and 2 UvrB subunits scans DNA for abnormalities. When the presence of a lesion has been verified by UvrB, the UvrA molecules dissociate. The protein is UvrABC system protein A of Treponema pallidum (strain Nichols).